The primary structure comprises 309 residues: Verprolin (309 aa).

Pro residues predominate over residues 1-13; sequence MAPAPPPPPPAPA. Residues 1–273 are disordered; sequence MAPAPPPPPP…PNRVDDHGRF (273 aa). Positions 27–44 constitute a WH2 domain; the sequence is DRSALLNSIQKGKKLKKA. The span at 82 to 91 shows a compositional bias: polar residues; it reads LPTSSNNTQQ. Pro residues predominate over residues 141–207; it reads TSAPPRPSIP…PPKVPPPPLS (67 aa).

It belongs to the verprolin family. As to quaternary structure, interacts with wsp1. Interacts with myo1 (via SH3 domain). Interacts with actin monomers.

The protein localises to the cytoplasm. The protein resides in the cytoskeleton. Functionally, involved in cytoskeletal organization and cellular growth. May exert its effects on the cytoskeleton directly, or indirectly via proline-binding proteins such as profilin or proteins possessing SH3 domains. Plays a role in actin patch assembly by enhancing the ability of myo1 to stimulate actin polymerization by the Arp2/3 complex. This chain is Verprolin, found in Schizosaccharomyces pombe (strain 972 / ATCC 24843) (Fission yeast).